The following is a 310-amino-acid chain: Probable manganese-dependent inorganic pyrophosphatase (310 aa).

Mn(2+)-binding residues include His9, Asp13, Asp15, Asp76, His98, and Asp150.

This sequence belongs to the PPase class C family. Mn(2+) serves as cofactor.

Its subcellular location is the cytoplasm. The enzyme catalyses diphosphate + H2O = 2 phosphate + H(+). The chain is Probable manganese-dependent inorganic pyrophosphatase from Streptococcus thermophilus (strain CNRZ 1066).